The following is a 192-amino-acid chain: Transcription termination/antitermination protein NusG (192 aa).

The 29-residue stretch at Val140–Leu168 folds into the KOW domain.

The protein belongs to the NusG family.

In terms of biological role, participates in transcription elongation, termination and antitermination. This is Transcription termination/antitermination protein NusG from Rickettsia typhi (strain ATCC VR-144 / Wilmington).